Reading from the N-terminus, the 160-residue chain is UPF0758 protein YfjY (160 aa).

Residues 38–160 (AFTSTQAARD…IYSFAEHGLL (123 aa)) enclose the MPN domain. Zn(2+)-binding residues include H109, H111, and D122. The short motif at 109-122 (HNHPSGDTTPSQAD) is the JAMM motif element.

This sequence belongs to the UPF0758 family.

The polypeptide is UPF0758 protein YfjY (yfjY) (Escherichia coli (strain K12)).